Here is a 189-residue protein sequence, read N- to C-terminus: Flavin prenyltransferase UbiX (189 aa).

FMN contacts are provided by residues 11–13 (GAS), Ser-37, 88–91 (SMRT), and Arg-123. Tyr-153 is a dimethylallyl phosphate binding site.

This sequence belongs to the UbiX/PAD1 family.

It carries out the reaction dimethylallyl phosphate + FMNH2 = prenylated FMNH2 + phosphate. Flavin prenyltransferase that catalyzes the synthesis of the prenylated FMN cofactor (prenyl-FMN) for 4-hydroxy-3-polyprenylbenzoic acid decarboxylase UbiD. The prenyltransferase is metal-independent and links a dimethylallyl moiety from dimethylallyl monophosphate (DMAP) to the flavin N5 and C6 atoms of FMN. This chain is Flavin prenyltransferase UbiX, found in Neisseria meningitidis serogroup B (strain ATCC BAA-335 / MC58).